Reading from the N-terminus, the 296-residue chain is LysM and putative peptidoglycan-binding domain-containing protein 4 (296 aa).

Residues 1–217 (MRHKELLSKT…PMDGADCGIQ (217 aa)) lie on the Extracellular side of the membrane. Asn-30 carries an N-linked (GlcNAc...) asparagine glycan. In terms of domain architecture, LysM spans 74–118 (LQRELAQEDSLNKLALQYGCKVADIKKVNNFIREQDLYALKSIKS). The chain crosses the membrane as a helical span at residues 218–238 (WWNAVFIMLLIGIVLPIFYLV). Residues 239-296 (YFKIQASGETPNSLNTAAIPNGSMAMGTVPGQAPRLAVAVPTVPSADSQFSQTTQAGN) lie on the Cytoplasmic side of the membrane.

The protein resides in the membrane. This Pongo abelii (Sumatran orangutan) protein is LysM and putative peptidoglycan-binding domain-containing protein 4 (LYSMD4).